A 119-amino-acid polypeptide reads, in one-letter code: MAPSQKKSRKSRNKSRSTLMISGLPILNSTDLEDRLLTSAIASQPLSQDWVRWIIDLWVSRVRSRNYLTQVARTLRAYPHWVTESMLSNHELTVWIRSRLISLDEHPLWRQMLEAYGQN.

The protein belongs to the orthoreovirus sigma-1s protein family.

The chain is Protein sigma-1-small (S1) from Mammalia (T1L).